The primary structure comprises 179 residues: Large ribosomal subunit protein uL5 (179 aa).

The protein belongs to the universal ribosomal protein uL5 family. In terms of assembly, part of the 50S ribosomal subunit; part of the 5S rRNA/L5/L18/L25 subcomplex. Contacts the 5S rRNA and the P site tRNA. Forms a bridge to the 30S subunit in the 70S ribosome.

This is one of the proteins that bind and probably mediate the attachment of the 5S RNA into the large ribosomal subunit, where it forms part of the central protuberance. In the 70S ribosome it contacts protein S13 of the 30S subunit (bridge B1b), connecting the 2 subunits; this bridge is implicated in subunit movement. Contacts the P site tRNA; the 5S rRNA and some of its associated proteins might help stabilize positioning of ribosome-bound tRNAs. The sequence is that of Large ribosomal subunit protein uL5 from Pectobacterium carotovorum subsp. carotovorum (strain PC1).